Here is a 99-residue protein sequence, read N- to C-terminus: Small ribosomal subunit protein bS20 (99 aa).

The protein belongs to the bacterial ribosomal protein bS20 family.

Its function is as follows. Binds directly to 16S ribosomal RNA. This chain is Small ribosomal subunit protein bS20, found in Thermomicrobium roseum (strain ATCC 27502 / DSM 5159 / P-2).